A 77-amino-acid chain; its full sequence is Envelope protein US9 homolog (77 aa).

A Di-leucine internalization motif motif is present at residues 12 to 13 (LL).

This sequence belongs to the alphaherpesvirinae envelope protein US9 family.

This chain is Envelope protein US9 homolog, found in Chlorocebus aethiops (Green monkey).